The chain runs to 414 residues: Histidine--tRNA ligase (414 aa).

Belongs to the class-II aminoacyl-tRNA synthetase family. As to quaternary structure, homodimer.

Its subcellular location is the cytoplasm. The enzyme catalyses tRNA(His) + L-histidine + ATP = L-histidyl-tRNA(His) + AMP + diphosphate + H(+). In Anaeromyxobacter sp. (strain K), this protein is Histidine--tRNA ligase.